Reading from the N-terminus, the 887-residue chain is MPSLNEIRSTFLNFFGGHGHEIVDSSPLVPRNDPTLMFTNAGMVQFKNVFTGLEHRDYNRATTSQKCVRAGGKHNDLDNVGYTARHHTFFEMLGNFSFGDYFKEDAIPFAWDLITKEFGIDKSRLLVTVYHTDDEAAEIWKKHAGLSDDRIIRIPTNDNFWMMGPTGPCGPCTEIFYDHGDHIWGGPPGSPEEDGDRFIEIWNLVFMQFEQFEDGTREPLPKPSIDTGMGLERIGALLQGSHDNYDTDLFKTLIEASAHATSVDPYGDKNVHHRVIADHLRSTSFLIADGVMPSNEGRGYVLRRIMRRAMRHAHLLGAQDPVMYRLVPALVGQMGQAFPELGRAQALIEETLMLEETRFRQTLDRGLKLLDEAVADVPEGGALPGETAFKLYDTYGFPLDLTQDALREKGRAVETEGFDAAMADQKAKARAAWAGSGETADESIWFDLAETHGATEFLGYDTEVAEGQVLALVKDGAQVAQLAEGETGWMVLNQTPFYAESGGQVGDSGGYLKSNGSGAIHDTQKRNGLFAHKVTPKAQPLKAGDVLEMRVDPARRTAIRANHSATHLLHEALRQALGAHVAQRGSLNAADRLRFDFSHSKALTLEELQKVEAEVNAYIRQNSPVETRIMTPDAARDLGAQALFGEKYGDEVRVVSMGRQSGSGKGVSGETYSLELCGGTHVKQTGDIGVFVTVGETASSSGVRRIEALTGEDAFAYLSAQDYRLAEVAASLKAQAADVPERVRSLLDERKALQNEVAQLRRELAMAGGGQGTAAPEAEAVAGVPFLAQSLSGVSGRDLPSLIDEHKARLGSGAILLIADTGGKAAVAAGVTADLTDRLSAVDLVKAAVAELGGKGGGGRPDMAQGGGKDASKADAAIAAAKAVIGG.

Zn(2+) contacts are provided by histidine 563, histidine 567, cysteine 677, and histidine 681.

It belongs to the class-II aminoacyl-tRNA synthetase family. Zn(2+) is required as a cofactor.

Its subcellular location is the cytoplasm. It carries out the reaction tRNA(Ala) + L-alanine + ATP = L-alanyl-tRNA(Ala) + AMP + diphosphate. Catalyzes the attachment of alanine to tRNA(Ala) in a two-step reaction: alanine is first activated by ATP to form Ala-AMP and then transferred to the acceptor end of tRNA(Ala). Also edits incorrectly charged Ser-tRNA(Ala) and Gly-tRNA(Ala) via its editing domain. In Dinoroseobacter shibae (strain DSM 16493 / NCIMB 14021 / DFL 12), this protein is Alanine--tRNA ligase.